The chain runs to 399 residues: Paraneoplastic antigen-like protein 6A (399 aa).

It belongs to the PNMA family. Expressed in the brain.

This Homo sapiens (Human) protein is Paraneoplastic antigen-like protein 6A.